A 152-amino-acid polypeptide reads, in one-letter code: Small ribosomal subunit protein uS13 (152 aa).

The protein belongs to the universal ribosomal protein uS13 family. In terms of assembly, component of the small ribosomal subunit.

It is found in the cytoplasm. Its function is as follows. Component of the small ribosomal subunit. The ribosome is a large ribonucleoprotein complex responsible for the synthesis of proteins in the cell. Plays an essential role in early embryonic development. In Danio rerio (Zebrafish), this protein is Small ribosomal subunit protein uS13 (rps18).